The following is a 412-amino-acid chain: Major facilitator superfamily domain-containing protein 3 (412 aa).

12 helical membrane-spanning segments follow: residues 10-30 (GLYL…PILL), 40-60 (VGLT…APLV), 68-88 (VWLT…AVLP), 99-119 (TTVM…DVAL), 152-172 (GGLL…LLAA), 173-193 (TYWL…LPWP), 204-224 (YLLQ…FVLT), 252-272 (LWSG…GGAL), 291-311 (LGSL…GASV), 320-340 (AVLL…TATF), 361-381 (FLAT…GVLA), and 384-404 (LGPH…VLDL).

This sequence belongs to the major facilitator superfamily. As to expression, in brain, expressed in the cortex, striatum, hippocampus, hypothalamus, thalamus and cerebellum (at protein level). Widely expressed with highest levels in kidney and liver.

The protein localises to the membrane. This Mus musculus (Mouse) protein is Major facilitator superfamily domain-containing protein 3 (Mfsd3).